Reading from the N-terminus, the 446-residue chain is Light-independent protochlorophyllide reductase subunit N (446 aa).

Residues Cys-22, Cys-47, and Cys-107 each coordinate [4Fe-4S] cluster.

It belongs to the BchN/ChlN family. In terms of assembly, protochlorophyllide reductase is composed of three subunits; ChlL, ChlN and ChlB. Forms a heterotetramer of two ChlB and two ChlN subunits. It depends on [4Fe-4S] cluster as a cofactor.

The protein resides in the plastid. Its subcellular location is the chloroplast. It catalyses the reaction chlorophyllide a + oxidized 2[4Fe-4S]-[ferredoxin] + 2 ADP + 2 phosphate = protochlorophyllide a + reduced 2[4Fe-4S]-[ferredoxin] + 2 ATP + 2 H2O. It functions in the pathway porphyrin-containing compound metabolism; chlorophyll biosynthesis (light-independent). Functionally, component of the dark-operative protochlorophyllide reductase (DPOR) that uses Mg-ATP and reduced ferredoxin to reduce ring D of protochlorophyllide (Pchlide) to form chlorophyllide a (Chlide). This reaction is light-independent. The NB-protein (ChlN-ChlB) is the catalytic component of the complex. The sequence is that of Light-independent protochlorophyllide reductase subunit N from Mesostigma viride (Green alga).